Consider the following 179-residue polypeptide: ATP synthase subunit delta (179 aa).

Belongs to the ATPase delta chain family. As to quaternary structure, F-type ATPases have 2 components, F(1) - the catalytic core - and F(0) - the membrane proton channel. F(1) has five subunits: alpha(3), beta(3), gamma(1), delta(1), epsilon(1). F(0) has three main subunits: a(1), b(2) and c(10-14). The alpha and beta chains form an alternating ring which encloses part of the gamma chain. F(1) is attached to F(0) by a central stalk formed by the gamma and epsilon chains, while a peripheral stalk is formed by the delta and b chains.

The protein localises to the cell inner membrane. F(1)F(0) ATP synthase produces ATP from ADP in the presence of a proton or sodium gradient. F-type ATPases consist of two structural domains, F(1) containing the extramembraneous catalytic core and F(0) containing the membrane proton channel, linked together by a central stalk and a peripheral stalk. During catalysis, ATP synthesis in the catalytic domain of F(1) is coupled via a rotary mechanism of the central stalk subunits to proton translocation. In terms of biological role, this protein is part of the stalk that links CF(0) to CF(1). It either transmits conformational changes from CF(0) to CF(1) or is implicated in proton conduction. This Burkholderia lata (strain ATCC 17760 / DSM 23089 / LMG 22485 / NCIMB 9086 / R18194 / 383) protein is ATP synthase subunit delta.